A 289-amino-acid chain; its full sequence is Probable endonuclease 4 (289 aa).

Residues His-74, His-115, Glu-150, Asp-184, His-187, His-218, Asp-231, His-233, and Glu-263 each coordinate Zn(2+).

It belongs to the AP endonuclease 2 family. It depends on Zn(2+) as a cofactor.

It carries out the reaction Endonucleolytic cleavage to 5'-phosphooligonucleotide end-products.. In terms of biological role, endonuclease IV plays a role in DNA repair. It cleaves phosphodiester bonds at apurinic or apyrimidinic (AP) sites, generating a 3'-hydroxyl group and a 5'-terminal sugar phosphate. The chain is Probable endonuclease 4 from Mycoplasma mycoides subsp. mycoides SC (strain CCUG 32753 / NCTC 10114 / PG1).